The chain runs to 313 residues: Pyrimidine-specific ribonucleoside hydrolase RihB (313 aa).

Residue Glu-11 is the Proton acceptor of the active site. Ca(2+) contacts are provided by Glu-11, Asp-16, and Val-124. Positions 227 and 239 each coordinate substrate. Asp-240 contributes to the Ca(2+) binding site.

Belongs to the IUNH family. RihB subfamily. Homotetramer. The cofactor is Ca(2+).

It catalyses the reaction a pyrimidine ribonucleoside + H2O = a pyrimidine nucleobase + D-ribose. In terms of biological role, hydrolyzes cytidine or uridine to ribose and cytosine or uracil, respectively. Has a clear preference for cytidine over uridine. Strictly specific for ribonucleosides. The polypeptide is Pyrimidine-specific ribonucleoside hydrolase RihB (Shigella flexneri serotype 5b (strain 8401)).